A 201-amino-acid chain; its full sequence is Imidazoleglycerol-phosphate dehydratase (201 aa).

Belongs to the imidazoleglycerol-phosphate dehydratase family.

The protein localises to the cytoplasm. It carries out the reaction D-erythro-1-(imidazol-4-yl)glycerol 3-phosphate = 3-(imidazol-4-yl)-2-oxopropyl phosphate + H2O. It participates in amino-acid biosynthesis; L-histidine biosynthesis; L-histidine from 5-phospho-alpha-D-ribose 1-diphosphate: step 6/9. The chain is Imidazoleglycerol-phosphate dehydratase from Synechococcus sp. (strain CC9902).